A 79-amino-acid polypeptide reads, in one-letter code: D-alanyl carrier protein (79 aa).

The region spanning 1–77 (MDVKETILNI…KIISGVVELM (77 aa)) is the Carrier domain. An O-(pantetheine 4'-phosphoryl)serine modification is found at serine 35.

The protein belongs to the DltC family. 4'-phosphopantetheine is transferred from CoA to a specific serine of apo-DCP.

Its subcellular location is the cytoplasm. It participates in cell wall biogenesis; lipoteichoic acid biosynthesis. Functionally, carrier protein involved in the D-alanylation of lipoteichoic acid (LTA). The loading of thioester-linked D-alanine onto DltC is catalyzed by D-alanine--D-alanyl carrier protein ligase DltA. The DltC-carried D-alanyl group is further transferred to cell membrane phosphatidylglycerol (PG) by forming an ester bond, probably catalyzed by DltD. D-alanylation of LTA plays an important role in modulating the properties of the cell wall in Gram-positive bacteria, influencing the net charge of the cell wall. The polypeptide is D-alanyl carrier protein (Streptococcus suis (strain 98HAH33)).